A 74-amino-acid chain; its full sequence is U4-theraphotoxin-Cg1a (74 aa).

Residues 1–19 (MNATIFALLLLLNLAMHNA) form the signal peptide. Residues 20–39 (AEQSSETDMDDTLLIPEINR) constitute a propeptide that is removed on maturation. 3 disulfide bridges follow: Cys-42–Cys-56, Cys-49–Cys-61, and Cys-55–Cys-71.

Belongs to the neurotoxin 36 family. 01 subfamily. In terms of tissue distribution, expressed by the venom gland.

The protein localises to the secreted. Probable ion channel inhibitor. The polypeptide is U4-theraphotoxin-Cg1a (Chilobrachys guangxiensis (Chinese earth tiger tarantula)).